Consider the following 285-residue polypeptide: Phosphatidylglycerol--prolipoprotein diacylglyceryl transferase (285 aa).

The next 4 membrane-spanning stretches (helical) occupy residues 30–50 (LEIR…HWHI), 67–87 (LMLW…ILLY), 103–123 (WHGG…VSIV), and 129–149 (VRVM…LFLG). Arg-150 lines the a 1,2-diacyl-sn-glycero-3-phospho-(1'-sn-glycerol) pocket. A run of 3 helical transmembrane segments spans residues 184–204 (SQVY…SILA), 213–233 (FGVL…AVEF), and 252–272 (GQVL…LTVL).

It belongs to the Lgt family.

Its subcellular location is the cell inner membrane. The enzyme catalyses L-cysteinyl-[prolipoprotein] + a 1,2-diacyl-sn-glycero-3-phospho-(1'-sn-glycerol) = an S-1,2-diacyl-sn-glyceryl-L-cysteinyl-[prolipoprotein] + sn-glycerol 1-phosphate + H(+). The protein operates within protein modification; lipoprotein biosynthesis (diacylglyceryl transfer). Its function is as follows. Catalyzes the transfer of the diacylglyceryl group from phosphatidylglycerol to the sulfhydryl group of the N-terminal cysteine of a prolipoprotein, the first step in the formation of mature lipoproteins. This chain is Phosphatidylglycerol--prolipoprotein diacylglyceryl transferase, found in Anaplasma marginale (strain Florida).